Consider the following 262-residue polypeptide: MTKQFAVIGNPIEQSRSPELHHAFAEKTGVDLNYQKRLAPLDGFESSMRSFFAEGGSGMNVTVPFKEQAFALCDVLTERAQIAKAVNTLWMENGKLHGDNTDGQGLVAAIQALEWNLENTTILILGAGGATRGVIYPLVQAGAQKIVIANRTLARAEQLVDDLKTAVPQAQLQAISLNDLEGDFDIVINATSTSLSGDALQLPEKLQFKYAYEMAYGKPSSFIDQAKQRNVPYAEGFGMLVGQAIEAFYIWNGVRPQLKDFL.

Shikimate-binding positions include 15-17 and Thr-62; that span reads SRS. Lys-66 (proton acceptor) is an active-site residue. Glu-78 contacts NADP(+). Shikimate-binding residues include Asn-87 and Asp-102. NADP(+)-binding positions include 126–130, 150–155, and Met-214; these read GAGGA and NRTLAR. Tyr-216 contributes to the shikimate binding site. Gly-236 is an NADP(+) binding site.

The protein belongs to the shikimate dehydrogenase family. In terms of assembly, homodimer.

The enzyme catalyses shikimate + NADP(+) = 3-dehydroshikimate + NADPH + H(+). It functions in the pathway metabolic intermediate biosynthesis; chorismate biosynthesis; chorismate from D-erythrose 4-phosphate and phosphoenolpyruvate: step 4/7. Functionally, involved in the biosynthesis of the chorismate, which leads to the biosynthesis of aromatic amino acids. Catalyzes the reversible NADPH linked reduction of 3-dehydroshikimate (DHSA) to yield shikimate (SA). The protein is Shikimate dehydrogenase (NADP(+)) of Acinetobacter baumannii (strain AB0057).